The chain runs to 147 residues: Hemoglobin subunit delta (147 aa).

The Globin domain maps to His-3–His-147. Heme b is bound by residues His-64 and His-93.

It belongs to the globin family. Heterotetramer of two delta chains and two alpha chains. In terms of tissue distribution, red blood cells.

This chain is Hemoglobin subunit delta (HBD), found in Ailuropoda melanoleuca (Giant panda).